The following is a 315-amino-acid chain: Leucine-rich repeat-containing protein 75B (315 aa).

The disordered stretch occupies residues methionine 1–cysteine 23. Residues proline 11–cysteine 23 show a composition bias toward low complexity. 2 LRR repeats span residues leucine 182–glutamate 195 and leucine 207–leucine 220. Positions proline 284–arginine 315 are disordered. Over residues glycine 286–threonine 297 the composition is skewed to low complexity.

It belongs to the LRRC75 family.

Functionally, may suppress myogenic differentiation by modulating MYOG expression and Erk1/2 signaling. The polypeptide is Leucine-rich repeat-containing protein 75B (Homo sapiens (Human)).